The chain runs to 348 residues: uncharacterized protein (348 aa).

The disordered stretch occupies residues 132-348 (SECRRSSDAL…QGTRRDSARL (217 aa)). A compositionally biased stretch (low complexity) spans 161–178 (STAPIPNAAISSARSSAR). Polar residues predominate over residues 192–207 (SRSSSETRSPGGTVQP). Residues 227–273 (AAGSLLPAPRPPASSASSPQAAAPAAPSATRLPRRTTPSAPRPSSRP) are compositionally biased toward low complexity. The segment covering 274 to 287 (ARPPIPAARPPPRR) has biased composition (pro residues). The span at 288 to 310 (TPGTPRPAAARARAPAGCSPARR) shows a compositional bias: low complexity.

This is an uncharacterized protein from Streptomyces fradiae (Streptomyces roseoflavus).